A 174-amino-acid chain; its full sequence is Gamma-crystallin C (174 aa).

Beta/gamma crystallin 'Greek key' domains lie at 2-40 (GKITLYEDKAFQGRSYESTTDCPNLQTYLSRCNSIRVES) and 41-83 (GCWM…CLIP). Cys23 carries the post-translational modification S-methylcysteine. The interval 84 to 87 (QTGS) is connecting peptide. 2 Beta/gamma crystallin 'Greek key' domains span residues 88 to 128 (HRLR…HVLE) and 129 to 171 (GCWV…RRVV).

It belongs to the beta/gamma-crystallin family. Monomer.

Functionally, crystallins are the dominant structural components of the vertebrate eye lens. The polypeptide is Gamma-crystallin C (CRYGC) (Macaca mulatta (Rhesus macaque)).